A 607-amino-acid chain; its full sequence is Chaperone protein DnaK (607 aa).

Thr-174 is modified (phosphothreonine; by autocatalysis). Positions 577–594 are enriched in polar residues; sequence QSAGSTAGNPGQGQSTEN. The tract at residues 577–607 is disordered; that stretch reads QSAGSTAGNPGQGQSTENPGGKTIDGDYKVN.

Belongs to the heat shock protein 70 family.

Its function is as follows. Acts as a chaperone. The chain is Chaperone protein DnaK from Dictyoglomus turgidum (strain DSM 6724 / Z-1310).